Here is a 273-residue protein sequence, read N- to C-terminus: Transposable element Tcb2 transposase (273 aa).

This sequence belongs to the transposase 5 family.

It localises to the nucleus. Functionally, probably essential for transposable element Tcb2 transposition. The sequence is that of Transposable element Tcb2 transposase from Caenorhabditis briggsae.